Reading from the N-terminus, the 1001-residue chain is Non-canonical poly(A) RNA polymerase protein Trf4-1 (1001 aa).

2 stretches are compositionally biased toward low complexity: residues 44-86 and 127-163; these read TING…NNSS and RNST…STNG. 2 disordered regions span residues 44 to 92 and 115 to 238; these read TING…PYLS and QQQQ…AGGA. A compositionally biased stretch (gly residues) spans 164–178; the sequence is PGAGTGTSTGAGGTG. Low complexity predominate over residues 179–216; that stretch reads TNSPATTASSTAATTTGPATSMSDTSNNPPQSTTTPAS. Residues Asp-328 and Asp-330 each coordinate Mn(2+). A PAP-associated domain is found at 458 to 517; sequence NLGVLLLEFFELYGRRFNYMKIGISIKNGGRYMPKDELQRDMVDGHRPSLLCIEDPLTPG. Disordered regions lie at residues 631 to 652, 687 to 740, 767 to 963, and 977 to 1001; these read PTAH…PGAH, QQQQ…AQEV, ASNS…LRGT, and SSES…RDER. Residues 635 to 649 show a composition bias toward basic residues; sequence GHSHAHSHSHGHAHP. Low complexity-rich tracts occupy residues 687 to 708 and 768 to 788; these read QQQQ…NQSQ and SNSW…TGSS. Gly residues predominate over residues 827–841; the sequence is VGTGSNRGGGDGSGG. Over residues 844–854 the composition is skewed to polar residues; that stretch reads YNQRNNHNSSG. The span at 855–880 shows a compositional bias: low complexity; it reads YYHQQYYVPPPMQQQLSKSNSSSNYH. The span at 881–912 shows a compositional bias: basic residues; sequence QQHHHSHSHGNHSHRQQHHHQQQHHHQQRPQH. 2 stretches are compositionally biased toward low complexity: residues 932–955 and 977–992; these read SAGN…SNNS and SSES…SSRS.

It belongs to the DNA polymerase type-B-like family. It depends on Mn(2+) as a cofactor.

It is found in the cytoplasm. The catalysed reaction is RNA(n) + ATP = RNA(n)-3'-adenine ribonucleotide + diphosphate. Functionally, involved in a post-transcriptional quality control mechanism limiting inappropriate expression of genetic information. Polyadenylation is required for the degradative activity of the exosome on several of its nuclear RNA substrates. Polyadenylates RNA processing and degradation intermediates of snRNAs and mRNAs. This chain is Non-canonical poly(A) RNA polymerase protein Trf4-1, found in Drosophila melanogaster (Fruit fly).